The chain runs to 275 residues: 2,3,4,5-tetrahydropyridine-2,6-dicarboxylate N-succinyltransferase (275 aa).

Substrate contacts are provided by arginine 106 and aspartate 143.

The protein belongs to the transferase hexapeptide repeat family. As to quaternary structure, homotrimer.

The protein resides in the cytoplasm. The catalysed reaction is (S)-2,3,4,5-tetrahydrodipicolinate + succinyl-CoA + H2O = (S)-2-succinylamino-6-oxoheptanedioate + CoA. Its pathway is amino-acid biosynthesis; L-lysine biosynthesis via DAP pathway; LL-2,6-diaminopimelate from (S)-tetrahydrodipicolinate (succinylase route): step 1/3. This chain is 2,3,4,5-tetrahydropyridine-2,6-dicarboxylate N-succinyltransferase, found in Pelagibacter ubique (strain HTCC1062).